A 415-amino-acid polypeptide reads, in one-letter code: SNF1 protein kinase subunit beta-2 (415 aa).

Disordered stretches follow at residues 1-43 (MGTT…EMDA), 55-158 (KCSD…PSEI), and 249-276 (EKNP…SSIA). Gly2 is lipidated: N-myristoyl glycine. Positions 9–19 (AQKKQTTKKCR) are enriched in basic residues. Residues 55–69 (KCSDSQDAGQPSREG) show a composition bias toward polar residues. Ser66 is modified (phosphoserine). Basic and acidic residues-rich tracts occupy residues 122–150 (PKQD…RAKE) and 249–264 (EKNP…EADS). Residues 154-335 (GPSEIKSSLM…LDRQQSNTDT (182 aa)) are kinase-interacting sequence (KIS); required for interaction with SNF1. Ser298 carries the phosphoserine modification. Positions 336 to 415 (SWLTPPQLPP…QILYTPIESS (80 aa)) are association with SNF1 kinase complex (ASC) domain; required for interaction with SNF4.

This sequence belongs to the 5'-AMP-activated protein kinase beta subunit family. In terms of assembly, component of the SNF1 kinase complex, a heterotrimeric complex composed of the catalytic alpha subunit SNF1, one of the three related beta subunits SIP1, SIP2 or GAL83, and the regulatory gamma subunit SNF4. The beta subunit serves as a bridge between the catalytic and the regulatory subunit. Interacts (via KIS domain) with SNF1. Interacts (via ASC domain) with SNF4. Phosphorylated by SNF1 in vitro.

It localises to the cytoplasm. Its subcellular location is the cell membrane. In terms of biological role, beta subunit of the SNF1 kinase complex, which is required for transcriptional, metabolic, and developmental adaptations in response to glucose limitation. Has a structural role, mediating heterotrimer formation, and a regulatory role, defining carbon source-regulated subcellular location and substrate specificity of the SNF1 kinase complex. Involved in the regulation of aging. Acts as a negative regulator of nuclear SNF1 activity in young cells by sequestering its activating gamma subunit at the plasma membrane. This chain is SNF1 protein kinase subunit beta-2 (SIP2), found in Saccharomyces cerevisiae (strain ATCC 204508 / S288c) (Baker's yeast).